A 160-amino-acid polypeptide reads, in one-letter code: Small ribosomal subunit protein uS9 (160 aa).

The protein belongs to the universal ribosomal protein uS9 family.

This is Small ribosomal subunit protein uS9 from Cereibacter sphaeroides (strain ATCC 17029 / ATH 2.4.9) (Rhodobacter sphaeroides).